We begin with the raw amino-acid sequence, 147 residues long: Large ribosomal subunit protein bL9 (147 aa).

It belongs to the bacterial ribosomal protein bL9 family.

In terms of biological role, binds to the 23S rRNA. The sequence is that of Large ribosomal subunit protein bL9 from Mycoplasma capricolum subsp. capricolum (strain California kid / ATCC 27343 / NCTC 10154).